We begin with the raw amino-acid sequence, 353 residues long: Photosystem II protein D1 (353 aa).

Position 2 is an N-acetylthreonine (Thr2). Position 2 is a phosphothreonine (Thr2). 3 helical membrane passes run 29–46, 118–133, and 142–156; these read YIGW…TATS, HFLL…EWEL, and WIAV…AAAA. His118 is a binding site for chlorophyll a. Pheophytin a is bound at residue Tyr126. [CaMn4O5] cluster contacts are provided by Asp170 and Glu189. A helical membrane pass occupies residues 197 to 218; the sequence is FHMLGVAGVFGGSLFSAMHGSL. His198 contacts chlorophyll a. A quinone contacts are provided by residues His215 and 264–265; that span reads SF. His215 lines the Fe cation pocket. Fe cation is bound at residue His272. The chain crosses the membrane as a helical span at residues 274-288; the sequence is FLAAWPVVGIWFTAL. [CaMn4O5] cluster-binding residues include His332, Glu333, Asp342, and Ala344. Residues 345–353 constitute a propeptide that is removed on maturation; sequence AVEAPSING.

The protein belongs to the reaction center PufL/M/PsbA/D family. PSII is composed of 1 copy each of membrane proteins PsbA, PsbB, PsbC, PsbD, PsbE, PsbF, PsbH, PsbI, PsbJ, PsbK, PsbL, PsbM, PsbT, PsbX, PsbY, PsbZ, Psb30/Ycf12, at least 3 peripheral proteins of the oxygen-evolving complex and a large number of cofactors. It forms dimeric complexes. The cofactor is The D1/D2 heterodimer binds P680, chlorophylls that are the primary electron donor of PSII, and subsequent electron acceptors. It shares a non-heme iron and each subunit binds pheophytin, quinone, additional chlorophylls, carotenoids and lipids. D1 provides most of the ligands for the Mn4-Ca-O5 cluster of the oxygen-evolving complex (OEC). There is also a Cl(-1) ion associated with D1 and D2, which is required for oxygen evolution. The PSII complex binds additional chlorophylls, carotenoids and specific lipids.. Tyr-161 forms a radical intermediate that is referred to as redox-active TyrZ, YZ or Y-Z. Post-translationally, C-terminally processed by CTPA; processing is essential to allow assembly of the oxygen-evolving complex and thus photosynthetic growth.

The protein localises to the plastid. The protein resides in the chloroplast thylakoid membrane. The enzyme catalyses 2 a plastoquinone + 4 hnu + 2 H2O = 2 a plastoquinol + O2. Photosystem II (PSII) is a light-driven water:plastoquinone oxidoreductase that uses light energy to abstract electrons from H(2)O, generating O(2) and a proton gradient subsequently used for ATP formation. It consists of a core antenna complex that captures photons, and an electron transfer chain that converts photonic excitation into a charge separation. The D1/D2 (PsbA/PsbD) reaction center heterodimer binds P680, the primary electron donor of PSII as well as several subsequent electron acceptors. This chain is Photosystem II protein D1, found in Vitis vinifera (Grape).